The following is a 383-amino-acid chain: Acetylornithine deacetylase (383 aa).

His-80 serves as a coordination point for Zn(2+). Asp-82 is a catalytic residue. Residue Asp-112 participates in Zn(2+) binding. Glu-144 is a catalytic residue. Positions 145, 169, and 355 each coordinate Zn(2+).

This sequence belongs to the peptidase M20A family. ArgE subfamily. In terms of assembly, homodimer. Zn(2+) serves as cofactor. Requires Co(2+) as cofactor. It depends on glutathione as a cofactor.

The protein resides in the cytoplasm. It catalyses the reaction N(2)-acetyl-L-ornithine + H2O = L-ornithine + acetate. It functions in the pathway amino-acid biosynthesis; L-arginine biosynthesis; L-ornithine from N(2)-acetyl-L-ornithine (linear): step 1/1. In terms of biological role, catalyzes the hydrolysis of the amide bond of N(2)-acetylated L-amino acids. Cleaves the acetyl group from N-acetyl-L-ornithine to form L-ornithine, an intermediate in L-arginine biosynthesis pathway, and a branchpoint in the synthesis of polyamines. The protein is Acetylornithine deacetylase of Salmonella arizonae (strain ATCC BAA-731 / CDC346-86 / RSK2980).